The sequence spans 1711 residues: Hybrid PKS-NRPS synthetase TAS1 (1711 aa).

Positions 43–397 are condensation (C) domain; the sequence is APLSKMQRAL…RNGLNSEHRV (355 aa). The interval 506–907 is adenylation (A) domain; that stretch reads QQQATLRPEQ…TVLLYGRINN (402 aa). The region spanning 1043 to 1119 is the Carrier 1 domain; sequence LEWAAAKARI…SQVGLVQSRR (77 aa). The residue at position 1079 (serine 1079) is an O-(pantetheine 4'-phosphoryl)serine. Polar residues predominate over residues 1114–1127; sequence LVQSRRGSSGSPRT. Residues 1114-1159 form a disordered region; that stretch reads LVQSRRGSSGSPRTVRSHARPQRKAKTPPRQARPETPESDYDQLPD. The segment covering 1128-1140 has biased composition (basic residues); that stretch reads VRSHARPQRKAKT. The Carrier 2 domain maps to 1159–1236; it reads DLRDDVQQSI…AQVELLGRFT (78 aa). Serine 1195 bears the O-(pantetheine 4'-phosphoryl)serine mark. A Ketosynthase family 3 (KS3) domain is found at 1266–1683; it reads REQYAIVGMS…GSTAHVVLSA (418 aa). Catalysis depends on for beta-ketoacyl synthase activity residues cysteine 1429, histidine 1565, and asparagine 1608.

In the N-terminal section; belongs to the NRP synthetase family. The cofactor is pantetheine 4'-phosphate.

The catalysed reaction is acetoacetyl-CoA + L-isoleucine + ATP = tenuazonic acid + AMP + diphosphate + CoA + 2 H(+). Functionally, hybrid PKS-NRPS synthetase that mediates the biosynthesis of the toxin tenuazonic acid (TeA), an inhibitor of protein biosynthesis on ribosomes by suppressing the release of new protein. TAS1 alone is sufficient for TeA synthesis via the condensation of isoleucine (Ile) with acetoacetyl-CoA by the N-terminal NRPS module and subsequent cyclization conducted by the C-terminal KS domain. The sequence is that of Hybrid PKS-NRPS synthetase TAS1 from Botryobasidium botryosum (strain FD-172 SS1).